Reading from the N-terminus, the 1372-residue chain is Disease resistance protein RRS1B (1372 aa).

Residues 2–137 (TESEQIVYIS…ETVRDVYEKL (136 aa)) form the TIR domain. One can recognise an NB-ARC domain in the interval 166–417 (VGIWGMPGIG…GCGFFPHVGI (252 aa)). 170 to 177 (GMPGIGKT) contacts ATP. The stretch at 491 to 515 (PEEIEGMFLDTSNLSFDIKHVAFDN) is one LRR 1 repeat. The stretch at 528–544 (NPEVHHVNNFLKGSLSS) is one LRR 2; degenerate repeat. LRR repeat units follow at residues 545–568 (LPNVLRLLHWENYPLQFLPQNFDP), 570–591 (HLVEINMPYSQLKKLWGGTKDL), 614–637 (AQNLEVVDLQGCTRLQSFPATGQL), 638–658 (LHLRVVNLSGCTEIKSFPEIP), 659–681 (PNIETLNLQGTGIIELPLSIVKP), 693–718 (IPGLSGVSNLEQSDLKPLTSLMKIST), 723–747 (PGKLSCLELNDCSRLRSLPNMVNLE), 749–767 (LKALDLSGCSELETIQGFP), 768–792 (RNLKELYLVGTAVRQVPQLPQSLEF), and 798–823 (CVSLKSIRLDFKKLPVHYTFSNCFDL). Positions 950–964 (INLHCWALGKAVERD) match the Nuclear localization signal motif. A DNA-binding region (WRKY) is located at residues 1174-1240 (DRGSRSSDLW…YISEHNHPFP (67 aa)). 2 disordered regions span residues 1246–1288 (LAGS…ASPP) and 1337–1372 (QTMFLSRRSSGGNMEAQGKNSSDDREVNLPSKILNR). Residues 1249 to 1269 (STRSSSSKCSDVTTSASSTVS) show a composition bias toward low complexity. The segment covering 1270–1279 (QDKEGPDKSH) has biased composition (basic and acidic residues). Residues 1337–1348 (QTMFLSRRSSGG) show a composition bias toward polar residues.

Belongs to the disease resistance TIR-NB-LRR family. Interacts with RPS4B. RPS4B-RRS1B heterodimer interacts with the bacterial effectors AvrRps4 and PopP2.

Its subcellular location is the nucleus. Functionally, transcription factor. Interacts specifically with the W box (5'-(T)TGAC[CT]-3'), a frequently occurring elicitor-responsive cis-acting element. Also acts as a disease resistance protein that specifically recognizes the AvrRps4 type III effector avirulence protein from P.syringae. Heterodimerization with RPS4B is required to form a functional complex to recognize AvrRps4 and to mediate the hypersensitive response. In Arabidopsis thaliana (Mouse-ear cress), this protein is Disease resistance protein RRS1B.